We begin with the raw amino-acid sequence, 277 residues long: Adenylate kinase (277 aa).

An ATP-binding site is contributed by 72–77 (GAGKGT). The NMP stretch occupies residues 92–121 (ATGDMLRSQVAKQTALGVQAKKIMDQGGLV). AMP contacts are provided by residues threonine 93, arginine 98, 119–121 (GLV), 148–151 (GFPR), and glutamine 155. Residues 189-226 (GRLVHPASGRSYHKLFNPPKVAMTDDVTGDPLVQRSDD) form an LID region. Residues arginine 190 and 199 to 200 (SY) each bind ATP. Residues arginine 223 and arginine 234 each coordinate AMP. Glutamine 262 serves as a coordination point for ATP.

Belongs to the adenylate kinase family. AK2 subfamily. Monomer.

Its subcellular location is the cytoplasm. The protein localises to the cytosol. It localises to the mitochondrion intermembrane space. It catalyses the reaction AMP + ATP = 2 ADP. Functionally, catalyzes the reversible transfer of the terminal phosphate group between ATP and AMP. Plays an important role in cellular energy homeostasis and in adenine nucleotide metabolism. Adenylate kinase activity is critical for regulation of the phosphate utilization and the AMP de novo biosynthesis pathways. The chain is Adenylate kinase from Eremothecium gossypii (strain ATCC 10895 / CBS 109.51 / FGSC 9923 / NRRL Y-1056) (Yeast).